A 238-amino-acid polypeptide reads, in one-letter code: Octanoyltransferase (238 aa).

A BPL/LPL catalytic domain is found at 40-220 (AGGSDALLLL…RVCDALDGRL (181 aa)). Residues 78-85 (RGGKITWH), 150-152 (AIG), and 163-165 (GFA) contribute to the substrate site. The active-site Acyl-thioester intermediate is the Cys-181.

It belongs to the LipB family.

It localises to the cytoplasm. It catalyses the reaction octanoyl-[ACP] + L-lysyl-[protein] = N(6)-octanoyl-L-lysyl-[protein] + holo-[ACP] + H(+). It participates in protein modification; protein lipoylation via endogenous pathway; protein N(6)-(lipoyl)lysine from octanoyl-[acyl-carrier-protein]: step 1/2. Functionally, catalyzes the transfer of endogenously produced octanoic acid from octanoyl-acyl-carrier-protein onto the lipoyl domains of lipoate-dependent enzymes. Lipoyl-ACP can also act as a substrate although octanoyl-ACP is likely to be the physiological substrate. This chain is Octanoyltransferase, found in Mycobacterium sp. (strain JLS).